The sequence spans 343 residues: NADH-cytochrome b5 reductase 2 (343 aa).

The chain crosses the membrane as a helical span at residues 41–61; sequence ILLGAAAVGLAGAGAYFFSGA. Positions 92 to 197 constitute an FAD-binding FR-type domain; sequence QGWLSLKLEE…KGPLPKYPWE (106 aa). Residue 200–235 coordinates FAD; that stretch reads KHKHIALVAGGTGITPMYQLIRAIFNNPDDKTKVTL.

It belongs to the flavoprotein pyridine nucleotide cytochrome reductase family. FAD serves as cofactor.

The protein localises to the mitochondrion outer membrane. The enzyme catalyses 2 Fe(III)-[cytochrome b5] + NADH = 2 Fe(II)-[cytochrome b5] + NAD(+) + H(+). May mediate the reduction of outer membrane cytochrome b5. This Neurospora crassa (strain ATCC 24698 / 74-OR23-1A / CBS 708.71 / DSM 1257 / FGSC 987) protein is NADH-cytochrome b5 reductase 2 (mcr-1).